Consider the following 537-residue polypeptide: Quadr-hydrophobin (537 aa).

A signal peptide spans 1-17; it reads MKFITVAAALFASTSLA. Hydrophobin regions lie at residues 63 to 199, 200 to 299, 300 to 421, and 422 to 537; these read GGNP…QNPI, GGNP…ENPT, GGNP…QDPL, and GGNP…RAII. Residues N70 and N113 are each glycosylated (N-linked (GlcNAc...) asparagine). Cystine bridges form between C134-C183, C144-C174, C145-C157, C184-C195, C234-C283, C244-C274, C245-C257, C284-C295, C356-C405, C366-C396, C367-C379, C406-C417, C471-C520, C481-C511, C482-C494, and C521-C532.

The protein belongs to the cerato-ulmin hydrophobin family. Homotetramer. Further self-assembles to form highly ordered films at water-air interfaces through intermolecular interactions.

It is found in the secreted. Its subcellular location is the cell wall. Its function is as follows. Aerial growth, conidiation, and dispersal of filamentous fungi in the environment rely upon a capability of their secreting small amphipathic proteins called hydrophobins (HPBs) with low sequence identity. Class I can self-assemble into an outermost layer of rodlet bundles on aerial cell surfaces, conferring cellular hydrophobicity that supports fungal growth, development and dispersal; whereas Class II form highly ordered films at water-air interfaces through intermolecular interactions but contribute nothing to the rodlet structure. In Cordyceps militaris (Caterpillar fungus), this protein is Quadr-hydrophobin.